The chain runs to 271 residues: Probable ribosomal RNA small subunit methyltransferase A (271 aa).

Residues Asn22, Leu24, Gly49, Glu70, Asp97, and Asn112 each contribute to the S-adenosyl-L-methionine site.

It belongs to the class I-like SAM-binding methyltransferase superfamily. rRNA adenine N(6)-methyltransferase family. RsmA subfamily.

It localises to the cytoplasm. In terms of biological role, specifically dimethylates two adjacent adenosines in the loop of a conserved hairpin near the 3'-end of 16S rRNA in the 30S particle. May play a critical role in biogenesis of 30S subunits. The sequence is that of Probable ribosomal RNA small subunit methyltransferase A from Methanosphaera stadtmanae (strain ATCC 43021 / DSM 3091 / JCM 11832 / MCB-3).